A 137-amino-acid chain; its full sequence is Ribosome-binding factor A (137 aa).

It belongs to the RbfA family. Monomer. Binds 30S ribosomal subunits, but not 50S ribosomal subunits or 70S ribosomes.

The protein localises to the cytoplasm. Its function is as follows. One of several proteins that assist in the late maturation steps of the functional core of the 30S ribosomal subunit. Associates with free 30S ribosomal subunits (but not with 30S subunits that are part of 70S ribosomes or polysomes). Required for efficient processing of 16S rRNA. May interact with the 5'-terminal helix region of 16S rRNA. This chain is Ribosome-binding factor A, found in Rhodopseudomonas palustris (strain BisB18).